A 179-amino-acid chain; its full sequence is Natural killer cells antigen CD94 (179 aa).

Residues 1 to 10 (MAVFKTTLWR) are Cytoplasmic-facing. A helical; Signal-anchor for type II membrane protein transmembrane segment spans residues 11–31 (LISGTLGIICLSLMSTLGILL). The Extracellular portion of the chain corresponds to 32–179 (KNSFTKLSIE…NRYICKQQLI (148 aa)). Intrachain disulfides connect Cys58–Cys70 and Cys61–Cys72. A C-type lectin domain is found at 68 to 175 (YRCNCYFISS…CEDKNRYICK (108 aa)). 2 N-linked (GlcNAc...) asparagine glycosylation sites follow: Asn83 and Asn132. 2 cysteine pairs are disulfide-bonded: Cys89-Cys174 and Cys152-Cys166.

In terms of assembly, can form disulfide-bonded heterodimer with NKG2 family members KLRC1 and KLRC2. KLRD1-KLRC1 heterodimer interacts with peptide-bound HLA-E-B2M heterotrimeric complex. KLRD1 plays a prominent role in directly interacting with HLA-E. KLRD1-KLRC1 interacts with much higher affinity with peptide-bound HLA-E-B2M than KLRD1-KLRC2. Interacts with the adapter protein TYROBP/DAP12; this interaction is required for cell surface expression and cell activation. As to expression, expressed in NK cell subsets (at protein level). Expressed in memory/effector CD8-positive alpha-beta T cell subsets (at protein level). Expressed in melanoma-specific cytotoxic T cell clones (at protein level). Expressed in terminally differentiated cytotoxic gamma-delta T cells (at protein level). KLRD1-KLRC1 and KLRD1-KLRC2 are differentially expressed in NK and T cell populations, with only minor subsets expressing both receptor complexes (at protein level).

It is found in the cell membrane. Functionally, immune receptor involved in self-nonself discrimination. In complex with KLRC1 or KLRC2 on cytotoxic and regulatory lymphocyte subsets, recognizes non-classical major histocompatibility (MHC) class Ib molecule HLA-E loaded with self-peptides derived from the signal sequence of classical MHC class Ia and non-classical MHC class Ib molecules. Enables cytotoxic cells to monitor the expression of MHC class I molecules in healthy cells and to tolerate self. Primarily functions as a ligand binding subunit as it lacks the capacity to signal. Its function is as follows. KLRD1-KLRC1 acts as an immune inhibitory receptor. Key inhibitory receptor on natural killer (NK) cells that regulates their activation and effector functions. Dominantly counteracts T cell receptor signaling on a subset of memory/effector CD8-positive T cells as part of an antigen-driven response to avoid autoimmunity. On intraepithelial CD8-positive gamma-delta regulatory T cells triggers TGFB1 secretion, which in turn limits the cytotoxic programming of intraepithelial CD8-positive alpha-beta T cells, distinguishing harmless from pathogenic antigens. In HLA-E-rich tumor microenvironment, acts as an immune inhibitory checkpoint and may contribute to progressive loss of effector functions of NK cells and tumor-specific T cells, a state known as cell exhaustion. Upon HLA-E-peptide binding, transmits intracellular signals through KLRC1 immunoreceptor tyrosine-based inhibition motifs (ITIMs) by recruiting INPP5D/SHIP-1 and INPPL1/SHIP-2 tyrosine phosphatases to ITIMs, and ultimately opposing signals transmitted by activating receptors through dephosphorylation of proximal signaling molecules. In terms of biological role, KLRD1-KLRC2 acts as an immune activating receptor. On cytotoxic lymphocyte subsets recognizes HLA-E loaded with signal sequence-derived peptides from non-classical MHC class Ib HLA-G molecules, likely playing a role in the generation and effector functions of adaptive NK cells and in maternal-fetal tolerance during pregnancy. Regulates the effector functions of terminally differentiated cytotoxic lymphocyte subsets, and in particular may play a role in adaptive NK cell response to viral infection. Upon HLA-E-peptide binding, transmits intracellular signals via the adapter protein TYROBP/DAP12, triggering the phosphorylation of proximal signaling molecules and cell activation. (Microbial infection) Viruses like human cytomegalovirus have evolved an escape mechanism whereby virus-induced down-regulation of host MHC class I molecules is coupled to the binding of viral peptides to HLA-E, restoring HLA-E expression and inducing HLA-E-dependent NK cell immune tolerance to infected cells. Recognizes HLA-E in complex with human cytomegalovirus UL40-derived peptide (VMAPRTLIL) and inhibits NK cell cytotoxicity. Functionally, (Microbial infection) May recognize HLA-E in complex with HIV-1 gag/Capsid protein p24-derived peptide (AISPRTLNA) on infected cells and may inhibit NK cell cytotoxicity, a mechanism that allows HIV-1 to escape immune recognition. Its function is as follows. (Microbial infection) Upon SARS-CoV-2 infection, may contribute to functional exhaustion of cytotoxic NK cells and CD8-positive T cells. On NK cells, may recognize HLA-E in complex with SARS-CoV-2 S/Spike protein S1-derived peptide (LQPRTFLL) expressed on the surface of lung epithelial cells, inducing NK cell exhaustion and dampening antiviral immune surveillance. This is Natural killer cells antigen CD94 (KLRD1) from Homo sapiens (Human).